The primary structure comprises 283 residues: Short-chain dehydrogenase cctT (283 aa).

A signal peptide spans 1 to 20 (MLKTVLITGCSHGGLGAAMA). Residues Ile-7, Thr-33, Lys-39, Glu-55, and Asn-83 each contribute to the NADP(+) site. N-linked (GlcNAc...) asparagine glycosylation is present at Asn-131. The active-site Proton donor is the Ser-133. NADP(+) contacts are provided by Tyr-147, Arg-151, Val-180, and Thr-182. Tyr-147 acts as the Proton acceptor in catalysis.

This sequence belongs to the short-chain dehydrogenases/reductases (SDR) family.

Its function is as follows. Short-chain dehydrogenase; part of the gene cluster that mediates the biosynthesis of the mycotoxin cyclochlorotine, a hepatotoxic and carcinogenic cyclic chlorinated pentapeptide. The function of cctT within the pathway, if any, remains undetermined. The NRPS cctN initially catalyzes the condensation of L-serine (Ser), Pro, L-2-aminobutyrate (2Abu), Ser, and beta-Phe in this order to produce isocyclotine. After the dichlorination of Pro2 catalyzed by cctP2 to produce isocyclochlorotine, the cctO-mediated transacylation of isocyclochlorotine can furnish cyclochlorotine. The subsequent hydroxylation of cyclochlorotine by cctR yields hydroxycyclochlorotine as the final product. CctP1 probably acts as a phenylalanine aminomutase and provides the uncommon building block beta-Phe. Furthermore, 2Abu can be synthesized from threonine by one of the threonine dehydratases and transaminases localized outside of the cluster. The functions of the remaining proteins encoded by the cluster, cctM and cctT, have not been identified yet. The protein is Short-chain dehydrogenase cctT of Talaromyces islandicus (Penicillium islandicum).